We begin with the raw amino-acid sequence, 223 residues long: DnaJ homolog subfamily B member 9 (223 aa).

The first 23 residues, 1-23 (MATPQSIFIFAICILMITELILA), serve as a signal peptide directing secretion. The 65-residue stretch at 26 to 90 (SYYDILGVPK…NRRKEYDTLG (65 aa)) folds into the J domain. The segment at 91–223 (HSAFTSGKGQ…VTTYTDCSGQ (133 aa)) is divergent targeting domain. At serine 133 the chain carries Phosphoserine.

In terms of assembly, interacts with HSPA5/BiP; interaction is direct. Interacts with ERN1/IRE1 (via the luminal region). Interacts with DERL1. Widely expressed. Expressed at highest level in the liver, placenta and kidney.

It is found in the endoplasmic reticulum lumen. Its function is as follows. Co-chaperone for Hsp70 protein HSPA5/BiP that acts as a key repressor of the ERN1/IRE1-mediated unfolded protein response (UPR). J domain-containing co-chaperones stimulate the ATPase activity of Hsp70 proteins and are required for efficient substrate recognition by Hsp70 proteins. In the unstressed endoplasmic reticulum, interacts with the luminal region of ERN1/IRE1 and selectively recruits HSPA5/BiP: HSPA5/BiP disrupts the dimerization of the active ERN1/IRE1 luminal region, thereby inactivating ERN1/IRE1. Also involved in endoplasmic reticulum-associated degradation (ERAD) of misfolded proteins. Required for survival of B-cell progenitors and normal antibody production. This Homo sapiens (Human) protein is DnaJ homolog subfamily B member 9 (DNAJB9).